The primary structure comprises 281 residues: 4-diphosphocytidyl-2-C-methyl-D-erythritol kinase (281 aa).

Residue lysine 15 is part of the active site. 98–108 contributes to the ATP binding site; it reads PTGAGLGGGSS. The active site involves aspartate 140.

Belongs to the GHMP kinase family. IspE subfamily.

The catalysed reaction is 4-CDP-2-C-methyl-D-erythritol + ATP = 4-CDP-2-C-methyl-D-erythritol 2-phosphate + ADP + H(+). Its pathway is isoprenoid biosynthesis; isopentenyl diphosphate biosynthesis via DXP pathway; isopentenyl diphosphate from 1-deoxy-D-xylulose 5-phosphate: step 3/6. In terms of biological role, catalyzes the phosphorylation of the position 2 hydroxy group of 4-diphosphocytidyl-2C-methyl-D-erythritol. The polypeptide is 4-diphosphocytidyl-2-C-methyl-D-erythritol kinase (Neisseria meningitidis serogroup A / serotype 4A (strain DSM 15465 / Z2491)).